Here is a 694-residue protein sequence, read N- to C-terminus: Outer dynein arm-docking complex subunit 1 (694 aa).

Coiled coils occupy residues 27 to 192 (ELSR…RYLN) and 222 to 259 (REEA…HLEQ). A disordered region spans residues 271–290 (RQPDPGVVQKEEQRAWETSE). Residues 339–418 (NFINEQNSEL…EKIKTDIQVL (80 aa)) are a coiled coil. Disordered stretches follow at residues 531-550 (QDEE…TLSS) and 571-694 (SILS…RGYN). 4 positions are modified to phosphoserine: serine 536, serine 542, serine 543, and serine 545. The span at 628–642 (TSSSSYLGSTGYLET) shows a compositional bias: low complexity. A compositionally biased stretch (polar residues) spans 655-672 (SQSMGSEMSRGFSSGSGQ). Over residues 673–687 (TSSAAPASRPSSATS) the composition is skewed to low complexity.

The protein belongs to the ODA1/DCC2 family. As to quaternary structure, component of the outer dynein arm-docking complex along with ODAD2, ODAD3, ODAD4 and CLXN. Interacts with ODAD3. Interacts with ODAD4; this interaction may facilitate the recruitment and/or attachment of outer dynein arm docking complex proteins,including ODAD1, ODAD3, and ODAD4 to ciliary axonemes. Interacts with DNAH9. Interacts with MNS1. Interacts with PIERCE1 and PIERCE2; the interactions link the outer dynein arms docking complex (ODA-DC) to the internal microtubule inner proteins (MIP) in cilium axoneme.

Its subcellular location is the cytoplasm. It localises to the cytoskeleton. The protein localises to the cilium axoneme. Its function is as follows. Component of the outer dynein arm-docking complex that mediates outer dynein arms (ODA) binding onto the doublet microtubule. Involved in mediating assembly of both ODAs and their axonemal docking complex onto ciliary microtubules. This Rattus norvegicus (Rat) protein is Outer dynein arm-docking complex subunit 1 (Odad1).